The primary structure comprises 208 residues: Sec-independent protein translocase protein TatB (208 aa).

Residues 1–21 form a helical membrane-spanning segment; it reads MFDIGVGELTLIAVVALVVLG. Residues 178-189 show a composition bias toward low complexity; that stretch reads APEPVAVAPVDA. A disordered region spans residues 178–208; the sequence is APEPVAVAPVDAGTPAAWTPSAPAKLQEKQP.

This sequence belongs to the TatB family. In terms of assembly, the Tat system comprises two distinct complexes: a TatABC complex, containing multiple copies of TatA, TatB and TatC subunits, and a separate TatA complex, containing only TatA subunits. Substrates initially bind to the TatABC complex, which probably triggers association of the separate TatA complex to form the active translocon.

It localises to the cell inner membrane. Its function is as follows. Part of the twin-arginine translocation (Tat) system that transports large folded proteins containing a characteristic twin-arginine motif in their signal peptide across membranes. Together with TatC, TatB is part of a receptor directly interacting with Tat signal peptides. TatB may form an oligomeric binding site that transiently accommodates folded Tat precursor proteins before their translocation. The polypeptide is Sec-independent protein translocase protein TatB (Xanthomonas euvesicatoria pv. vesicatoria (strain 85-10) (Xanthomonas campestris pv. vesicatoria)).